An 824-amino-acid polypeptide reads, in one-letter code: Lysine-specific histone demethylase 1B homolog (824 aa).

A disordered region spans residues 1–31 (MTTELEIDDRKEEEAQIPGETSESEEGDEPV). The SWIRM domain occupies 245–346 (PFTDVIANIV…YGAFDFRIDP (102 aa)). FAD-binding positions include 352–407 (PKIA…AQII), Val579, Glu788, and 796–798 (QTM).

This sequence belongs to the flavin monoamine oxidase family. FAD is required as a cofactor. In terms of tissue distribution, in hermaphrodites, expressed in gut cells, embryonic cells and sheath cells. Not expressed in sperm or pharyngeal neurons.

The protein localises to the nucleus. It catalyses the reaction N(6),N(6)-dimethyl-L-lysyl(4)-[histone H3] + 2 A + 2 H2O = L-lysyl(4)-[histone H3] + 2 formaldehyde + 2 AH2. Functionally, histone demethylase that demethylates di-methylated 'Lys-4' of histone H3, a specific tag for epigenetic transcriptional activation, thereby acting as a corepressor. Acts by oxidizing the substrate by FAD to generate the corresponding imine that is subsequently hydrolyzed. Plays a role in the mitotic development of the germline. May be involved in H3 demethylation in mitotic cells including gut and embryonic cells. Plays a role in sensitivity upon interstrand cross-link DNA damage, probably by positively regulating the expression of mlh-1. Plays a role in developmental growth and lifespan regulation in response to ultraviolet-induced damage. No obvious role in larval development, sex chromosome segregation or for regulating meiotic crossover frequency. In Caenorhabditis elegans, this protein is Lysine-specific histone demethylase 1B homolog.